The chain runs to 200 residues: Large ribosomal subunit protein uL4 (200 aa).

The disordered stretch occupies residues 43 to 72 (RAQKTRAEVSGSGKKPWRQKGTGRARSGDI).

The protein belongs to the universal ribosomal protein uL4 family. Part of the 50S ribosomal subunit.

Its function is as follows. One of the primary rRNA binding proteins, this protein initially binds near the 5'-end of the 23S rRNA. It is important during the early stages of 50S assembly. It makes multiple contacts with different domains of the 23S rRNA in the assembled 50S subunit and ribosome. Forms part of the polypeptide exit tunnel. In Haemophilus ducreyi (strain 35000HP / ATCC 700724), this protein is Large ribosomal subunit protein uL4.